A 36-amino-acid polypeptide reads, in one-letter code: U-limacoditoxin(7)-Dv63 (36 aa).

The N-terminal stretch at 1–19 (MFKPRVILLITIIAVFSEF) is a signal peptide.

It belongs to the limacoditoxin-7 family. Expressed by the venom secretory cell of the spine. The spine is a cuticular structure containing a single large nucleated venom-secreting cell at its base. It is an independent unit capable of producing, storing and injecting venom. On the back of D.vulnerans caterpillars, spines are grouped together by 50 to 100 to form scoli, of which there are eight in D.vulnerans.

It is found in the secreted. Functionally, peptide with insecticidal and antiparasitic activities. Induces irreversible paralysis in D.melanogaster when tested at high doses. It shows a moderate antiparasitic activity against the major pathogenic nematode of ruminants (H.contortus, EC(50)=41.3 uM). Does not show antimicrobial activities. Does not induce increase in intracellular calcium in mouse DRG neurons, suggesting that it does not induce pain. The chain is U-limacoditoxin(7)-Dv63 from Doratifera vulnerans (Mottled cup moth).